A 315-amino-acid polypeptide reads, in one-letter code: Olfactory receptor 4E1 (315 aa).

At 1 to 33 the chain is on the extracellular side; sequence MEEAILLNQTSLVTYFRLRGLSVNHKARIAMFS. Residue asparagine 8 is glycosylated (N-linked (GlcNAc...) asparagine). A helical membrane pass occupies residues 34 to 54; that stretch reads MFLIFYVLTLIGNVLIVITII. Residues 55-61 lie on the Cytoplasmic side of the membrane; that stretch reads YDHRLHT. Residues 62–82 form a helical membrane-spanning segment; that stretch reads PMYFFLSNLSFIDVCHSTVTV. The Extracellular portion of the chain corresponds to 83–101; the sequence is PKMLRDVWSEEKLISFDAC. A disulfide bridge connects residues cysteine 101 and cysteine 183. The helical transmembrane segment at 102–122 threads the bilayer; sequence VTQMFFLHLFACTEIFLLTVM. The Cytoplasmic segment spans residues 123–143; sequence AYDRYVAICKPLQYMIVMNWK. A helical membrane pass occupies residues 144 to 164; that stretch reads VCVLLAVALWTGGTIHSIALT. Topologically, residues 165–208 are extracellular; sequence SLTIKLPYCGPDEIDNFFCDVPQVIKLACIDTHVIEILIVSNSG. Residues 209–229 form a helical membrane-spanning segment; it reads LISVVCFVVLVVSYAVILVSL. At 230 to 240 the chain is on the cytoplasmic side; sequence RQQISKGKRKA. A helical transmembrane segment spans residues 241 to 261; the sequence is LSTCAAHLTVVTLFLGHCIFI. Over 262-272 the chain is Extracellular; sequence YSRPSTSLPED. Residues 273–293 traverse the membrane as a helical segment; the sequence is KVVSVFFTAVTPLLNPIIYTL. At 294-315 the chain is on the cytoplasmic side; sequence RNEEMKSALNKLVGRKERKEEK.

It belongs to the G-protein coupled receptor 1 family.

It is found in the cell membrane. Its function is as follows. Odorant receptor. The polypeptide is Olfactory receptor 4E1 (OR4E1) (Homo sapiens (Human)).